The following is a 611-amino-acid chain: Immediate-early protein 3 (611 aa).

Disordered stretches follow at residues 119-155 (TASH…QRLD) and 180-383 (EEEY…SGSD). Positions 138 to 151 (HSEKKAKKHKNKQR) are enriched in basic residues. Positions 141-147 (KKAKKHK) match the Nuclear localization signal motif. Over residues 198–213 (HFDERSPSRSSSDHGG) the composition is skewed to basic and acidic residues. Over residues 230–240 (SEDEDDEDDER) the composition is skewed to acidic residues. A compositionally biased stretch (low complexity) spans 260–277 (HGGSHSSRSSIKSSGSGS). A Nuclear localization signal motif is present at residues 279–285 (RHHHKRK). Low complexity predominate over residues 341 to 376 (PPSSGSNSNKHSSSSGGSTSSSHKKQQQQQAPSKKP).

It is found in the host nucleus. In terms of biological role, strong transcriptional activator of the E1 promoter, shows an autoregulatory function by repression of the IE1/IE3 promoter. The IE1 protein has some additive effect on the trans-activating properties of the IE3 protein. The protein is Immediate-early protein 3 (IE1) of Mus musculus (Mouse).